A 315-amino-acid polypeptide reads, in one-letter code: Probable mannose-6-phosphate isomerase GmuF (315 aa).

4 residues coordinate Zn(2+): Gln95, His97, Glu115, and His172. Residue Arg192 is part of the active site.

The protein belongs to the mannose-6-phosphate isomerase type 1 family. Zn(2+) is required as a cofactor.

The catalysed reaction is D-mannose 6-phosphate = D-fructose 6-phosphate. Functionally, seems to be involved in the degradation of glucomannan. This is Probable mannose-6-phosphate isomerase GmuF (gmuF) from Bacillus subtilis (strain 168).